Reading from the N-terminus, the 242-residue chain is Biosynthetic peptidoglycan transglycosylase (242 aa).

The chain crosses the membrane as a helical span at residues 19 to 39 (LMVVLAVFWGGGIALFSVAPV).

This sequence belongs to the glycosyltransferase 51 family.

It localises to the cell inner membrane. The enzyme catalyses [GlcNAc-(1-&gt;4)-Mur2Ac(oyl-L-Ala-gamma-D-Glu-L-Lys-D-Ala-D-Ala)](n)-di-trans,octa-cis-undecaprenyl diphosphate + beta-D-GlcNAc-(1-&gt;4)-Mur2Ac(oyl-L-Ala-gamma-D-Glu-L-Lys-D-Ala-D-Ala)-di-trans,octa-cis-undecaprenyl diphosphate = [GlcNAc-(1-&gt;4)-Mur2Ac(oyl-L-Ala-gamma-D-Glu-L-Lys-D-Ala-D-Ala)](n+1)-di-trans,octa-cis-undecaprenyl diphosphate + di-trans,octa-cis-undecaprenyl diphosphate + H(+). Its pathway is cell wall biogenesis; peptidoglycan biosynthesis. Its function is as follows. Peptidoglycan polymerase that catalyzes glycan chain elongation from lipid-linked precursors. This Escherichia coli O17:K52:H18 (strain UMN026 / ExPEC) protein is Biosynthetic peptidoglycan transglycosylase.